We begin with the raw amino-acid sequence, 157 residues long: MSRRHAAEKKIIPADPIYGSVTLERFINKVMMHGKKSIARKIVYNALERFAKKVGAENVLEAFEEALENAKPLLEVRSRRVGGATYQVPVEVAAGRRDCLAMQWIIKFARAKPGKSMEVGLATELVDCFNKQGATIKKREDTHRMAEANKAFAHYKW.

This sequence belongs to the universal ribosomal protein uS7 family. As to quaternary structure, part of the 30S ribosomal subunit. Contacts proteins S9 and S11.

Functionally, one of the primary rRNA binding proteins, it binds directly to 16S rRNA where it nucleates assembly of the head domain of the 30S subunit. Is located at the subunit interface close to the decoding center, probably blocks exit of the E-site tRNA. The protein is Small ribosomal subunit protein uS7 of Chlamydia abortus (strain DSM 27085 / S26/3) (Chlamydophila abortus).